The chain runs to 273 residues: 2,3,4,5-tetrahydropyridine-2,6-dicarboxylate N-succinyltransferase (273 aa).

Residues R104 and D141 each contribute to the substrate site.

This sequence belongs to the transferase hexapeptide repeat family. Homotrimer.

The protein resides in the cytoplasm. The enzyme catalyses (S)-2,3,4,5-tetrahydrodipicolinate + succinyl-CoA + H2O = (S)-2-succinylamino-6-oxoheptanedioate + CoA. It functions in the pathway amino-acid biosynthesis; L-lysine biosynthesis via DAP pathway; LL-2,6-diaminopimelate from (S)-tetrahydrodipicolinate (succinylase route): step 1/3. This Psychrobacter sp. (strain PRwf-1) protein is 2,3,4,5-tetrahydropyridine-2,6-dicarboxylate N-succinyltransferase.